The chain runs to 88 residues: LYR motif-containing protein 2 (88 aa).

A mitochondrion-targeting transit peptide spans 1 to 19 (MAASRLPPATLTLKQFVRR).

This sequence belongs to the complex I LYR family.

Its subcellular location is the mitochondrion. Functionally, involved in efficient integration of the N-module into mitochondrial respiratory chain complex I. This chain is LYR motif-containing protein 2 (LYRM2), found in Pongo abelii (Sumatran orangutan).